A 432-amino-acid chain; its full sequence is Phytase AppA (432 aa).

Positions 1 to 22 are cleaved as a signal peptide; the sequence is MKAILIPFLSLLIPLTPQSAFA. Arginine 38 serves as a coordination point for 1D-myo-inositol hexakisphosphate. The active-site Nucleophile is histidine 39. Residues 42-46 and arginine 114 each bind 1D-myo-inositol hexakisphosphate; that span reads RAPTK. Disulfide bonds link cysteine 99-cysteine 130, cysteine 155-cysteine 430, cysteine 200-cysteine 210, and cysteine 404-cysteine 413. 1D-myo-inositol hexakisphosphate-binding positions include arginine 289 and 325–327; that span reads HDT. The active-site Proton donor is the aspartate 326.

The protein belongs to the histidine acid phosphatase family. Monomer.

The protein resides in the periplasm. It catalyses the reaction 1D-myo-inositol hexakisphosphate + H2O = 1D-myo-inositol 1,2,3,4,5-pentakisphosphate + phosphate. The enzyme catalyses 1D-myo-inositol 1,2,3,4,5-pentakisphosphate + H2O = 1D-myo-inositol 2,3,4,5-tetrakisphosphate + phosphate. It carries out the reaction 1D-myo-inositol 2,3,4,5-tetrakisphosphate + H2O = 1D-myo-inositol 2,4,5-triphosphate + phosphate. The catalysed reaction is 1D-myo-inositol 2,4,5-triphosphate + H2O = 1D-myo-inositol 2,5-bisphosphate + phosphate. It catalyses the reaction 1D-myo-inositol 2,5-bisphosphate + H2O = 1D-myo-inositol 2-phosphate + phosphate. The enzyme catalyses GTP + H2O = GDP + phosphate + H(+). Contains three consecutive and one non-consecutive disulfide bonds and shows a strong dependence on DsbC for its full activity. Competitively inhibited by tartaric acid and by sodium fluorid. Catalyzes the hydrolysis of phytate (or myo-inositol hexakisphosphate, an indigestible organic form of phosphorus that is found in many plant tissues) to myo-inositol and inorganic phosphate. Dephosphorylates phytate in a stereospecific way by sequential removal of phosphate groups to produce myo-inositol 2-monophosphate. Also shows phosphoanhydride phosphatase activity and hydrolyzes the distal phosphoryl residues of GTP, the 5'-beta-phosphoryl residue of the regulatory nucleotide ppGpp and tripolyphosphates. Does not split most phosphomonoesters with the exception of the synthetic substrate p-nitrophenyl phosphate (pNPP), 2,3-bisphosphoglycerate and fructose 1,6-bisphosphate. The protein is Phytase AppA of Escherichia coli (strain K12).